Reading from the N-terminus, the 204-residue chain is Putative AgrB-like protein (204 aa).

Transmembrane regions (helical) follow at residues 52–74 (YGIALVTGLLLQTVTVHLSYLWL), 87–107 (LNCTLISLMMFVLAPFVFQNV), 111–131 (NWIVLGTFAFILLNMFLFAPA), and 156–176 (LILTGIALLIPFAEMKTLIMI).

This sequence belongs to the AgrB family.

It localises to the cell membrane. May be involved in the proteolytic processing of a quorum sensing system signal molecule precursor. The sequence is that of Putative AgrB-like protein from Listeria monocytogenes serotype 4a (strain HCC23).